Here is a 464-residue protein sequence, read N- to C-terminus: Nuclear distribution protein nudF 2 (464 aa).

One can recognise a LisH domain in the interval 9 to 41 (QAAELNKSIIAYLSAHGLAETLAAFRKESDFPD). Residues 63–88 (NSTLMKKLLALESHNKALRNELNSTR) are a coiled coil. 8 WD repeats span residues 112 to 151 (SHRD…LERT), 154 to 195 (GHTM…KNVK), 199 to 238 (GHDH…RVKT), 241 to 280 (DHTG…PICK), 285 to 343 (GHEN…MTLT), 344 to 383 (GHAS…RCVK), 388 to 424 (AHDG…AELP), and 426 to 464 (SKLD…RSHK).

The protein belongs to the WD repeat LIS1/nudF family. As to quaternary structure, self-associates. Interacts with nudE and dynein.

It is found in the cytoplasm. The protein resides in the cytoskeleton. Its subcellular location is the spindle pole. Positively regulates the activity of the minus-end directed microtubule motor protein dynein. May enhance dynein-mediated microtubule sliding by targeting dynein to the microtubule plus end. Required for nuclear migration during vegetative growth as well as development. Required for retrograde early endosome (EE) transport from the hyphal tip. Required for localization of dynein to the mitotic spindle poles. Recruits additional proteins to the dynein complex at SPBs. This Penicillium rubens (strain ATCC 28089 / DSM 1075 / NRRL 1951 / Wisconsin 54-1255) (Penicillium chrysogenum) protein is Nuclear distribution protein nudF 2.